Reading from the N-terminus, the 408-residue chain is DNA primase DnaG (408 aa).

A Toprim domain is found at Asp-172 to Pro-248. Mg(2+) is bound by residues Glu-178, Asp-222, and Asp-224. The disordered stretch occupies residues Ala-279 to Glu-304.

This sequence belongs to the archaeal DnaG primase family. Forms a ternary complex with MCM helicase and DNA. Component of the archaeal exosome complex. Mg(2+) is required as a cofactor.

The catalysed reaction is ssDNA + n NTP = ssDNA/pppN(pN)n-1 hybrid + (n-1) diphosphate.. Functionally, RNA polymerase that catalyzes the synthesis of short RNA molecules used as primers for DNA polymerase during DNA replication. Also part of the exosome, which is a complex involved in RNA degradation. Acts as a poly(A)-binding protein that enhances the interaction between heteromeric, adenine-rich transcripts and the exosome. This chain is DNA primase DnaG, found in Pyrobaculum aerophilum (strain ATCC 51768 / DSM 7523 / JCM 9630 / CIP 104966 / NBRC 100827 / IM2).